Reading from the N-terminus, the 303-residue chain is Epimerase family protein YfhF (303 aa).

It belongs to the NAD(P)-dependent epimerase/dehydratase family. SDR39U1 subfamily.

The chain is Epimerase family protein YfhF (yfhF) from Bacillus subtilis (strain 168).